Consider the following 411-residue polypeptide: Arginase (411 aa).

A disordered region spans residues 83 to 106 (NNYINNNDNNNDNNNDNNNDNNNN). Positions 193, 216, 218, and 220 each coordinate Mn(2+). Residues Asn222, Ser229, and Asp274 each contribute to the L-arginine site. Mn(2+) is bound by residues Asp323 and Asp325.

It belongs to the arginase family. Homotrimer; oligomerization is dependent on Mn(2+) binding. Mn(2+) is required as a cofactor.

It catalyses the reaction L-arginine + H2O = urea + L-ornithine. The protein operates within nitrogen metabolism; urea cycle; L-ornithine and urea from L-arginine: step 1/1. Its activity is regulated as follows. Feedback inhibition by product L-ornithine,. Inhibited by 2(S)-amino-6-boronohexanoic acid (ABH); however, with less efficiency than human ARG1. Catalyzes the hydrolysis of L-arginine into urea and L-ornithine, which is a precursor for polyamine biosynthesis. May play a role in parasite intra-hepatic development during the host liver stage. The polypeptide is Arginase (Plasmodium falciparum (isolate 3D7)).